The sequence spans 348 residues: Dihydroorotase (348 aa).

The Zn(2+) site is built by His-14 and His-16. Substrate is bound by residues 16–18 and Asn-42; that span reads HLR. Lys-100, His-137, and His-175 together coordinate Zn(2+). Lys-100 carries the post-translational modification N6-carboxylysine. His-137 lines the substrate pocket. Leu-220 is a binding site for substrate. Asp-248 provides a ligand contact to Zn(2+). Asp-248 is an active-site residue. Substrate-binding residues include His-252 and Ala-264.

It belongs to the metallo-dependent hydrolases superfamily. DHOase family. Class II DHOase subfamily. In terms of assembly, homodimer. Zn(2+) is required as a cofactor.

The catalysed reaction is (S)-dihydroorotate + H2O = N-carbamoyl-L-aspartate + H(+). The protein operates within pyrimidine metabolism; UMP biosynthesis via de novo pathway; (S)-dihydroorotate from bicarbonate: step 3/3. Functionally, catalyzes the reversible cyclization of carbamoyl aspartate to dihydroorotate. The sequence is that of Dihydroorotase from Pseudomonas putida (strain ATCC 700007 / DSM 6899 / JCM 31910 / BCRC 17059 / LMG 24140 / F1).